The sequence spans 179 residues: Nicotinamide-nucleotide adenylyltransferase (179 aa).

Belongs to the archaeal NMN adenylyltransferase family.

The protein localises to the cytoplasm. It catalyses the reaction beta-nicotinamide D-ribonucleotide + ATP + H(+) = diphosphate + NAD(+). The protein operates within cofactor biosynthesis; NAD(+) biosynthesis; NAD(+) from nicotinamide D-ribonucleotide: step 1/1. The sequence is that of Nicotinamide-nucleotide adenylyltransferase from Thermoplasma acidophilum (strain ATCC 25905 / DSM 1728 / JCM 9062 / NBRC 15155 / AMRC-C165).